Here is a 99-residue protein sequence, read N- to C-terminus: Small ribosomal subunit protein bS18 (99 aa).

This sequence belongs to the bacterial ribosomal protein bS18 family. In terms of assembly, part of the 30S ribosomal subunit. Forms a tight heterodimer with protein bS6.

Binds as a heterodimer with protein bS6 to the central domain of the 16S rRNA, where it helps stabilize the platform of the 30S subunit. The protein is Small ribosomal subunit protein bS18 of Christiangramia forsetii (strain DSM 17595 / CGMCC 1.15422 / KT0803) (Gramella forsetii).